Consider the following 54-residue polypeptide: Large ribosomal subunit protein bL32c (54 aa).

The protein belongs to the bacterial ribosomal protein bL32 family.

It is found in the plastid. Its subcellular location is the chloroplast. In Panax ginseng (Korean ginseng), this protein is Large ribosomal subunit protein bL32c.